The sequence spans 562 residues: Arginine--tRNA ligase (562 aa).

The 'HIGH' region signature appears at 129-139 (ANPTGPLHVGH).

The protein belongs to the class-I aminoacyl-tRNA synthetase family. In terms of assembly, monomer.

Its subcellular location is the cytoplasm. It carries out the reaction tRNA(Arg) + L-arginine + ATP = L-arginyl-tRNA(Arg) + AMP + diphosphate. The polypeptide is Arginine--tRNA ligase (Xanthomonas axonopodis pv. citri (strain 306)).